We begin with the raw amino-acid sequence, 70 residues long: NADH dehydrogenase [ubiquinone] 1 alpha subcomplex subunit 1 (70 aa).

Residues 1 to 21 (MWFEILPGLAVMGVCLVIPGV) traverse the membrane as a helical segment.

Belongs to the complex I NDUFA1 subunit family. As to quaternary structure, complex I is composed of 45 different subunits.

It localises to the mitochondrion inner membrane. Its function is as follows. Accessory subunit of the mitochondrial membrane respiratory chain NADH dehydrogenase (Complex I), that is believed not to be involved in catalysis. Complex I functions in the transfer of electrons from NADH to the respiratory chain. The immediate electron acceptor for the enzyme is believed to be ubiquinone. This Cricetulus griseus (Chinese hamster) protein is NADH dehydrogenase [ubiquinone] 1 alpha subcomplex subunit 1 (NDUFA1).